The sequence spans 1614 residues: Low-density lipoprotein receptor-related protein 5 (1614 aa).

An N-terminal signal peptide occupies residues 1–30; that stretch reads METAPTRAPPPPPPPLLLLVLYCSLVPAAA. The segment at 31 to 287 is beta-propeller 1; that stretch reads SPLLLFANRR…YSPMDIQVLS (257 aa). The Extracellular portion of the chain corresponds to 31–1383; the sequence is SPLLLFANRR…PPSDDIPAHS (1353 aa). LDL-receptor class B repeat units lie at residues 74 to 118, 119 to 161, 162 to 205, 206 to 246, and 247 to 289; these read GAVY…DWVG, KKLY…DPAH, GYMY…DLEE, QKLY…TLSG, and DTLY…LSQE. N92 and N137 each carry an N-linked (GlcNAc...) asparagine glycan. The region spanning 294-336 is the EGF-like 1 domain; that stretch reads FHTPCEEDNGGCSHLCLLSPREPFYSCACPTGVQLQDNGKTCK. Cystine bridges form between C298/C309, C305/C320, and C322/C335. Residues 340-601 are beta-propeller 2; that stretch reads EEVLLLARRT…AVNVAKVVGT (262 aa). 5 LDL-receptor class B repeats span residues 384-426, 427-469, 470-513, 514-556, and 557-599; these read GYVY…DWVA, RNLY…HPVM, GLMY…DLQE, GKLY…LGDF, and IYWT…AKVV. Residues N445 and N498 are each glycosylated (N-linked (GlcNAc...) asparagine). The EGF-like 2 domain maps to 600–640; sequence GTNPCADGNGGCSHLCFFTPRATKCGCPIGLELLSDMKTCI. Intrachain disulfides connect C604-C615, C611-C624, and C626-C639. The beta-propeller 3 stretch occupies residues 643–902; it reads EAFLVFTSRA…VFHSSRQDGL (260 aa). 5 LDL-receptor class B repeats span residues 686-728, 729-771, 772-814, 815-854, and 855-897; these read NHIY…DWMG, KNLY…DPTK, GYIY…DYAD, QRLY…TQYS, and DYIY…FHSS. A glycan (N-linked (GlcNAc...) asparagine) is linked at N704. N877 carries N-linked (GlcNAc...) asparagine glycosylation. The region spanning 901–941 is the EGF-like 3 domain; it reads GLNDCVHSNGQCGQLCLAIPGGHRCGCASHYTLDPSSRNCS. Disulfide bonds link C905/C916, C912/C925, and C927/C940. Residues 944-1211 form a beta-propeller 4 region; sequence STFLLFSQKF…AVEEVSLEEF (268 aa). LDL-receptor class B repeat units lie at residues 988 to 1034, 1035 to 1077, 1078 to 1122, 1123 to 1164, and 1165 to 1206; these read KFIY…DIYS, RTLF…NAER, GYMY…DNAL, GKLF…VLGR, and HLYW…VEEV. Residues 1002–1025 form a disordered region; sequence AKDDGTQPSMLTSPSQSLSPDRQP. A compositionally biased stretch (polar residues) spans 1007-1021; it reads TQPSMLTSPSQSLSP. The EGF-like 4 domain maps to 1212–1253; it reads SAHPCARDNGGCSHICIAKGDGTPRCSCPVHLVLLQNLLTCG. Intrachain disulfides connect C1216/C1227, C1223/C1237, C1239/C1252, C1258/C1272, C1265/C1285, C1279/C1294, C1297/C1309, C1304/C1322, C1316/C1331, C1335/C1347, C1342/C1360, and C1354/C1369. 3 LDL-receptor class A domains span residues 1257–1295, 1296–1332, and 1334–1370; these read TCSP…EGCP, VCSA…ANCD, and VCLP…LMCE. The chain crosses the membrane as a helical span at residues 1384–1406; the sequence is SAIGPVIGIILSLFVMGGVYFVC. The Cytoplasmic segment spans residues 1407–1614; the sequence is QRVMCQRYTG…PPPSPCTDSS (208 aa). A disordered region spans residues 1474–1498; sequence RNHVTGASSSSSSSTKATLYPPILN. The PPPSP motif A motif lies at 1499–1505; that stretch reads PPPSPAT. Positions 1537 to 1544 match the PPPSP motif B motif; the sequence is PPTTPCST. A disordered region spans residues 1567–1599; sequence SDSDPYPPPPTPHSQYLSAEDSCPPSPGTERSY. Positions 1573 to 1580 match the PPPSP motif C motif; that stretch reads PPPPTPHS. The PPPSP motif D motif lies at 1590 to 1595; the sequence is PPSPGT. The PPPSP motif E motif lies at 1604–1611; it reads PPPPSPCT.

Belongs to the LDLR family. In terms of assembly, homodimer; disulfide-linked. Forms phosphorylated oligomer aggregates on Wnt-signaling. Component of a WNT-signaling complex that contains a WNT protein, a FZD protein and LRP5 or LRP6. Interacts with FZD8; the interaction is formed on WNT-binding and signaling. Interacts (via the phosphorylated PPPSP motif domains) with AXIN1; the interaction prevents inhibition of beta-catenin phosphorylation and signaling and is enhanced in the presence of GSK3B and WNT1 or WNT3A. Interacts (via beta-propeller regions 3 and 4) with DKK1; the interaction, enhanced by MESD and/or KREMEN, inhibits beta-catenin signaling by preventing GSK3-mediated phosphorylation of the PPPSP motifs and subsequent, AXIN1 binding. Interacts with CSNK1E. Interacts with SOST; the interaction antagonizes canonical Wnt signaling. Interacts with APCDD1. Interacts with MESD; the interaction prevents the formation of LRP5 aggregates, targets LRP5 to the plasma membrane and, when complexed with KREMEN2, increases DKK1 binding. Interacts with CAPRIN2. Post-translationally, phosphorylation of cytoplasmic PPPSP motifs regulates the signal transduction of the Wnt signaling pathway through acting as a docking site for AXIN1. Widely expressed, with the highest expression levels in liver, heart, and lung and the lowest levels in brain and spleen.

It localises to the membrane. Its subcellular location is the endoplasmic reticulum. Acts as a coreceptor with members of the frizzled family of seven-transmembrane spanning receptors to transduce signal by Wnt proteins. Activates the canonical Wnt signaling pathway that controls cell fate determination and self-renewal during embryonic development and adult tissue regeneration. In particular, may play an important role in the development of the posterior patterning of the epiblast during gastrulation. During bone development, regulates osteoblast proliferation and differentiation thus determining bone mass. Mechanistically, the formation of the signaling complex between Wnt ligand, frizzled receptor and LRP5 coreceptor promotes the recruitment of AXIN1 to LRP5, stabilizing beta-catenin/CTNNB1 and activating TCF/LEF-mediated transcriptional programs. Acts as a coreceptor for non-Wnt proteins, such as norrin/NDP. Binding of norrin/NDP to frizzled 4/FZD4-LRP5 receptor complex triggers beta-catenin/CTNNB1-dependent signaling known to be required for retinal vascular development. Plays a role in controlling postnatal vascular regression in retina via macrophage-induced endothelial cell apoptosis. In Mus musculus (Mouse), this protein is Low-density lipoprotein receptor-related protein 5.